The primary structure comprises 480 residues: Endoplasmic reticulum lectin 1 (480 aa).

The signal sequence occupies residues 1 to 27 (MRRSDRFPCAGASLLVVLCGVFPSSFG). 2 consecutive MRH domains span residues 108 to 245 (SSCS…LCNH) and 339 to 466 (SYCF…ICKI). Cysteines 110 and 123 form a disulfide. The interval 152 to 172 (VKKSPSEAGENQEDKERTEGH) is disordered. The span at 163-172 (QEDKERTEGH) shows a compositional bias: basic and acidic residues. Intrachain disulfides connect Cys-198-Cys-231, Cys-214-Cys-243, Cys-341-Cys-354, Cys-418-Cys-452, and Cys-433-Cys-464.

It is found in the endoplasmic reticulum lumen. Functionally, probable lectin that binds selectively to improperly folded lumenal proteins. May function in endoplasmic reticulum quality control and endoplasmic reticulum-associated degradation (ERAD) of both non-glycosylated proteins and glycoproteins. This Xenopus laevis (African clawed frog) protein is Endoplasmic reticulum lectin 1 (erlec1).